A 599-amino-acid chain; its full sequence is Sulfite reductase [NADPH] flavoprotein alpha-component (599 aa).

The Flavodoxin-like domain occupies 64-202 (VTLISASQTG…AASEWRARVV (139 aa)). Residues 70 to 75 (SQTGNA), 117 to 120 (STQG), and 153 to 162 (LGDTSYEFFC) contribute to the FMN site. One can recognise an FAD-binding FR-type domain in the interval 234 to 448 (DAPLTATLSV…IEHNDNFRLP (215 aa)). FAD contacts are provided by residues T322, A356, 386–389 (RLYS), 404–406 (TVG), Y410, and 419–422 (GGAS). NADP(+) contacts are provided by residues 519–520 (SR), 525–529 (KIYVQ), and D561. Y599 is an FAD binding site.

This sequence belongs to the NADPH-dependent sulphite reductase flavoprotein subunit CysJ family. In the N-terminal section; belongs to the flavodoxin family. The protein in the C-terminal section; belongs to the flavoprotein pyridine nucleotide cytochrome reductase family. In terms of assembly, alpha(8)-beta(8). The alpha component is a flavoprotein, the beta component is a hemoprotein. Requires FAD as cofactor. It depends on FMN as a cofactor.

The enzyme catalyses hydrogen sulfide + 3 NADP(+) + 3 H2O = sulfite + 3 NADPH + 4 H(+). It functions in the pathway sulfur metabolism; hydrogen sulfide biosynthesis; hydrogen sulfide from sulfite (NADPH route): step 1/1. Component of the sulfite reductase complex that catalyzes the 6-electron reduction of sulfite to sulfide. This is one of several activities required for the biosynthesis of L-cysteine from sulfate. The flavoprotein component catalyzes the electron flow from NADPH -&gt; FAD -&gt; FMN to the hemoprotein component. This chain is Sulfite reductase [NADPH] flavoprotein alpha-component, found in Salmonella paratyphi A (strain ATCC 9150 / SARB42).